A 1171-amino-acid chain; its full sequence is ATP-dependent helicase/deoxyribonuclease subunit B (1171 aa).

A UvrD-like helicase ATP-binding domain is found at 1–301; it reads MSLRFVIGRA…AHLEMHYEAR (301 aa). Residue 8–15 coordinates ATP; that stretch reads GRAGSGKS. A UvrD-like helicase C-terminal domain is found at 281-587; it reads MKQPRFHSQA…QFANIPPSLD (307 aa). Positions 805, 1129, 1132, and 1138 each coordinate [4Fe-4S] cluster.

This sequence belongs to the helicase family. AddB/RexB type 1 subfamily. As to quaternary structure, heterodimer of AddA and AddB. The cofactor is Mg(2+). It depends on [4Fe-4S] cluster as a cofactor.

The heterodimer acts as both an ATP-dependent DNA helicase and an ATP-dependent, dual-direction single-stranded exonuclease. Recognizes the chi site generating a DNA molecule suitable for the initiation of homologous recombination. The AddB subunit has 5' -&gt; 3' nuclease activity but not helicase activity. This is ATP-dependent helicase/deoxyribonuclease subunit B from Bacillus mycoides (strain KBAB4) (Bacillus weihenstephanensis).